We begin with the raw amino-acid sequence, 136 residues long: Glutamyl-tRNA(Gln) amidotransferase subunit C, mitochondrial (136 aa).

This sequence belongs to the GatC family. As to quaternary structure, subunit of the heterotrimeric GatCAB amidotransferase (AdT) complex, composed of A (QRSL1), B (GATB) and C (GATC) subunits.

The protein localises to the mitochondrion. It carries out the reaction L-glutamyl-tRNA(Gln) + L-glutamine + ATP + H2O = L-glutaminyl-tRNA(Gln) + L-glutamate + ADP + phosphate + H(+). In terms of biological role, allows the formation of correctly charged Gln-tRNA(Gln) through the transamidation of misacylated Glu-tRNA(Gln) in the mitochondria. The reaction takes place in the presence of glutamine and ATP through an activated gamma-phospho-Glu-tRNA(Gln). The chain is Glutamyl-tRNA(Gln) amidotransferase subunit C, mitochondrial from Homo sapiens (Human).